Consider the following 425-residue polypeptide: Serine--tRNA ligase (425 aa).

230-232 is a binding site for L-serine; sequence TAE. Residue 261–263 coordinates ATP; that stretch reads RSE. Position 284 (glutamate 284) interacts with L-serine. 348–351 provides a ligand contact to ATP; that stretch reads EISS. Serine 384 contributes to the L-serine binding site.

Belongs to the class-II aminoacyl-tRNA synthetase family. Type-1 seryl-tRNA synthetase subfamily. In terms of assembly, homodimer. The tRNA molecule binds across the dimer.

Its subcellular location is the cytoplasm. The enzyme catalyses tRNA(Ser) + L-serine + ATP = L-seryl-tRNA(Ser) + AMP + diphosphate + H(+). It carries out the reaction tRNA(Sec) + L-serine + ATP = L-seryl-tRNA(Sec) + AMP + diphosphate + H(+). Its pathway is aminoacyl-tRNA biosynthesis; selenocysteinyl-tRNA(Sec) biosynthesis; L-seryl-tRNA(Sec) from L-serine and tRNA(Sec): step 1/1. Its function is as follows. Catalyzes the attachment of serine to tRNA(Ser). Is also able to aminoacylate tRNA(Sec) with serine, to form the misacylated tRNA L-seryl-tRNA(Sec), which will be further converted into selenocysteinyl-tRNA(Sec). This is Serine--tRNA ligase from Streptococcus pyogenes serotype M28 (strain MGAS6180).